The sequence spans 537 residues: [Pyruvate dehydrogenase [acetyl-transferring]]-phosphatase 1, mitochondrial (537 aa).

The transit peptide at 1 to 71 (MPAPTQLFFP…WWQYTQGRRY (71 aa)) directs the protein to the mitochondrion. The PPM-type phosphatase domain maps to 109 to 525 (ILGFDSNQLP…DDITIIVVQF (417 aa)). 2 residues coordinate Mn(2+): aspartate 144 and glycine 145. Position 202 is an N6-acetyllysine (lysine 202). The Mn(2+) site is built by aspartate 418 and aspartate 516.

The protein belongs to the PP2C family. As to quaternary structure, heterodimer of a catalytic (PDP1) and a regulatory (PDPR) subunit. Mn(2+) is required as a cofactor. Requires Mg(2+) as cofactor.

It localises to the mitochondrion. It catalyses the reaction O-phospho-L-seryl-[pyruvate dehydrogenase E1 alpha subunit] + H2O = L-seryl-[pyruvate dehydrogenase E1 alpha subunit] + phosphate. With respect to regulation, magnesium-dependent and calcium-stimulated. PDP1 activity strongly depends on its Ca(2+)-dependent binding to the lipoyl domain of E2 subunit of component of the pyruvate dehydrogenase complex. Its function is as follows. Mitochondrial enzyme that catalyzes the dephosphorylation and concomitant reactivation of the alpha subunit of the E1 component of the pyruvate dehydrogenase complex (PDC), thereby stimulating the conversion of pyruvate into acetyl-CoA. The sequence is that of [Pyruvate dehydrogenase [acetyl-transferring]]-phosphatase 1, mitochondrial from Homo sapiens (Human).